A 506-amino-acid polypeptide reads, in one-letter code: Histidine ammonia-lyase (506 aa).

The segment at residues 144–146 (ASG) is a cross-link (5-imidazolinone (Ala-Gly)). Serine 145 carries the post-translational modification 2,3-didehydroalanine (Ser).

The protein belongs to the PAL/histidase family. In terms of processing, contains an active site 4-methylidene-imidazol-5-one (MIO), which is formed autocatalytically by cyclization and dehydration of residues Ala-Ser-Gly.

The protein localises to the cytoplasm. It catalyses the reaction L-histidine = trans-urocanate + NH4(+). The protein operates within amino-acid degradation; L-histidine degradation into L-glutamate; N-formimidoyl-L-glutamate from L-histidine: step 1/3. This is Histidine ammonia-lyase from Legionella pneumophila (strain Paris).